A 259-amino-acid chain; its full sequence is Dihydroorotate dehydrogenase B (NAD(+)), electron transfer subunit (259 aa).

An FAD-binding FR-type domain is found at 2–102 (MQKQNMIVVN…LGPLGHGFPV (101 aa)). FAD-binding positions include 53 to 56 (RPIS), 70 to 72 (LYR), and 77 to 78 (GT). [2Fe-2S] cluster-binding residues include Cys-221, Cys-226, Cys-229, and Cys-246.

The protein belongs to the PyrK family. In terms of assembly, heterotetramer of 2 PyrK and 2 PyrD type B subunits. [2Fe-2S] cluster serves as cofactor. It depends on FAD as a cofactor.

It participates in pyrimidine metabolism; UMP biosynthesis via de novo pathway; orotate from (S)-dihydroorotate (NAD(+) route): step 1/1. Its function is as follows. Responsible for channeling the electrons from the oxidation of dihydroorotate from the FMN redox center in the PyrD type B subunit to the ultimate electron acceptor NAD(+). The chain is Dihydroorotate dehydrogenase B (NAD(+)), electron transfer subunit from Bacillus cereus (strain 03BB102).